A 64-amino-acid chain; its full sequence is Alpha-mammal toxin Lqh2 (64 aa).

In terms of domain architecture, LCN-type CS-alpha/beta spans Lys2 to Arg64. Cystine bridges form between Cys12–Cys63, Cys16–Cys36, Cys22–Cys46, and Cys26–Cys48. Arginine amide is present on Arg64.

The protein belongs to the long (4 C-C) scorpion toxin superfamily. Sodium channel inhibitor family. Alpha subfamily. As to expression, expressed by the venom gland.

It localises to the secreted. Its function is as follows. Alpha toxins bind voltage-independently at site-3 of sodium channels (Nav) and inhibit the inactivation of the activated channels, thereby blocking neuronal transmission. The dissociation is voltage-dependent. Is active on mammals and competes for alpha-toxins binding on both mammalian and cockroach sodium channels. This Leiurus hebraeus (Hebrew deathstalker scorpion) protein is Alpha-mammal toxin Lqh2.